Reading from the N-terminus, the 130-residue chain is Chaperone protein SycT (130 aa).

Binds to YopT.

Its function is as follows. Functions as a specific chaperone for YopT. This is Chaperone protein SycT (sycT) from Yersinia enterocolitica.